Consider the following 360-residue polypeptide: Phospho-N-acetylmuramoyl-pentapeptide-transferase (360 aa).

A run of 10 helical transmembrane segments spans residues 25–45 (RAIL…PTLI), 73–93 (TMGG…WADL), 97–117 (YVWV…VDDY), 128–148 (LIAK…AVYL), 168–188 (VMPQ…VGTS), 199–219 (GLAI…AYVS), 236–256 (TAEL…FLWF), 262–282 (LVFM…IIAI), 288–308 (LVLF…MLQV), and 338–358 (VIVR…ATLK).

It belongs to the glycosyltransferase 4 family. MraY subfamily. Mg(2+) is required as a cofactor.

The protein resides in the cell inner membrane. The catalysed reaction is UDP-N-acetyl-alpha-D-muramoyl-L-alanyl-gamma-D-glutamyl-meso-2,6-diaminopimeloyl-D-alanyl-D-alanine + di-trans,octa-cis-undecaprenyl phosphate = di-trans,octa-cis-undecaprenyl diphospho-N-acetyl-alpha-D-muramoyl-L-alanyl-D-glutamyl-meso-2,6-diaminopimeloyl-D-alanyl-D-alanine + UMP. It participates in cell wall biogenesis; peptidoglycan biosynthesis. Its function is as follows. Catalyzes the initial step of the lipid cycle reactions in the biosynthesis of the cell wall peptidoglycan: transfers peptidoglycan precursor phospho-MurNAc-pentapeptide from UDP-MurNAc-pentapeptide onto the lipid carrier undecaprenyl phosphate, yielding undecaprenyl-pyrophosphoryl-MurNAc-pentapeptide, known as lipid I. The polypeptide is Phospho-N-acetylmuramoyl-pentapeptide-transferase (Idiomarina loihiensis (strain ATCC BAA-735 / DSM 15497 / L2-TR)).